The sequence spans 862 residues: Phosphofurin acidic cluster sorting protein 2 (862 aa).

Disordered stretches follow at residues 151–215 (HEDS…TTSM), 263–436 (LDVE…TRSQ), and 658–713 (SSAT…SQGV). The span at 263 to 272 (LDVENPSDSG) shows a compositional bias: low complexity. Over residues 313–328 (SHREPPSPADVPEKTR) the composition is skewed to basic and acidic residues. Over residues 332–344 (GKQQLSDSVSDTV) the composition is skewed to polar residues. A phosphoserine mark is found at Ser361, Ser387, Ser424, Ser662, and Ser665. 2 stretches are compositionally biased toward low complexity: residues 658–693 (SSAT…KEAS) and 700–710 (PSVSGGLSSPS).

It belongs to the PACS family. As to quaternary structure, interacts with BID and PKD2. Interacts with SIRT1. Interacts with HDAC1. Interacts with TRPV1. Interacts with WDR37.

Its subcellular location is the endoplasmic reticulum. The protein localises to the mitochondrion. In terms of biological role, multifunctional sorting protein that controls the endoplasmic reticulum (ER)-mitochondria communication, including the apposition of mitochondria with the ER and ER homeostasis. In addition, in response to apoptotic inducer, translocates BIB to mitochondria, which initiates a sequence of events including the formation of mitochondrial truncated BID, the release of cytochrome c, the activation of caspase-3 thereby causing cell death. May also involved in ion channel trafficking, directing acidic cluster-containing ion channels to distinct subcellular compartments. The protein is Phosphofurin acidic cluster sorting protein 2 (Pacs2) of Mus musculus (Mouse).